The sequence spans 385 residues: Bifunctional chorismate mutase/prephenate dehydratase (385 aa).

In terms of domain architecture, Chorismate mutase spans 1-92 (MPANNSLLIF…ESVATQKKLL (92 aa)). R11, R28, K39, D48, E52, S84, and Q88 together coordinate substrate. The region spanning 105 to 285 (NFSFLGPKGS…NITRFILLNR (181 aa)) is the Prephenate dehydratase domain. Residues 286 to 385 (NPKKISKNIP…PSEKITPIAP (100 aa)) are regulatory. Residues 299-376 (TLIFTTGQEA…RFIKILGCYP (78 aa)) form the ACT domain.

The protein resides in the cytoplasm. It carries out the reaction chorismate = prephenate. It catalyses the reaction prephenate + H(+) = 3-phenylpyruvate + CO2 + H2O. It functions in the pathway amino-acid biosynthesis; L-phenylalanine biosynthesis; phenylpyruvate from prephenate: step 1/1. It participates in metabolic intermediate biosynthesis; prephenate biosynthesis; prephenate from chorismate: step 1/1. Its function is as follows. Catalyzes the Claisen rearrangement of chorismate to prephenate and the decarboxylation/dehydration of prephenate to phenylpyruvate. The protein is Bifunctional chorismate mutase/prephenate dehydratase (pheA) of Buchnera aphidicola subsp. Acyrthosiphon pisum (strain APS) (Acyrthosiphon pisum symbiotic bacterium).